A 363-amino-acid chain; its full sequence is Cytoskeleton protein RodZ (363 aa).

Residues 1–111 (MNTEASQDQT…LGKKHKKRDG (111 aa)) are Cytoplasmic-facing. Residues 19–79 (LRQARESLGL…KLVHLPEDEL (61 aa)) form the HTH cro/C1-type domain. A DNA-binding region (H-T-H motif) is located at residues 30-49 (QQTVAERLCLKVSTIRDIEE). The helical; Signal-anchor for type II membrane protein transmembrane segment at 112 to 132 (WLMSFTWLIVLVVLGLTGAWW) threads the bilayer. Topologically, residues 133 to 363 (WQNHQAQQAE…RVARLTVGVE (231 aa)) are periplasmic. The disordered stretch occupies residues 151 to 277 (SAQLSQNGGQ…PLPTADAGVS (127 aa)). Residues 188–199 (PLTNHSVSAITN) show a composition bias toward polar residues. Low complexity predominate over residues 200 to 225 (SAPTTSSVPTTSSATTSSVPTTSSVP). A compositionally biased stretch (polar residues) spans 226–243 (KINSTEPVDTANTNTTMH). Residues 247 to 259 (AASAAVSPSQVPQ) show a composition bias toward low complexity.

Belongs to the RodZ family.

The protein resides in the cell inner membrane. Cytoskeletal protein that is involved in cell-shape control through regulation of the length of the long axis. The polypeptide is Cytoskeleton protein RodZ (Yersinia pseudotuberculosis serotype O:1b (strain IP 31758)).